The chain runs to 529 residues: Bifunctional purine biosynthesis protein PurH (529 aa).

The region spanning 1–148 (MQQRRPIRRA…KNHKDVAIVV (148 aa)) is the MGS-like domain.

It belongs to the PurH family.

The enzyme catalyses (6R)-10-formyltetrahydrofolate + 5-amino-1-(5-phospho-beta-D-ribosyl)imidazole-4-carboxamide = 5-formamido-1-(5-phospho-D-ribosyl)imidazole-4-carboxamide + (6S)-5,6,7,8-tetrahydrofolate. It carries out the reaction IMP + H2O = 5-formamido-1-(5-phospho-D-ribosyl)imidazole-4-carboxamide. Its pathway is purine metabolism; IMP biosynthesis via de novo pathway; 5-formamido-1-(5-phospho-D-ribosyl)imidazole-4-carboxamide from 5-amino-1-(5-phospho-D-ribosyl)imidazole-4-carboxamide (10-formyl THF route): step 1/1. It participates in purine metabolism; IMP biosynthesis via de novo pathway; IMP from 5-formamido-1-(5-phospho-D-ribosyl)imidazole-4-carboxamide: step 1/1. The protein is Bifunctional purine biosynthesis protein PurH of Yersinia pseudotuberculosis serotype IB (strain PB1/+).